The following is a 389-amino-acid chain: S-adenosylmethionine synthase (389 aa).

H15 is a binding site for ATP. D17 is a Mg(2+) binding site. E43 contacts K(+). L-methionine-binding residues include E56 and Q99. Residues 99-109 (QSPDIAQGVNE) are flexible loop. ATP is bound by residues 166–168 (DAK), 234–235 (RF), D243, 249–250 (RK), A266, and K270. D243 lines the L-methionine pocket. Residue K274 coordinates L-methionine.

This sequence belongs to the AdoMet synthase family. In terms of assembly, homotetramer; dimer of dimers. Mg(2+) serves as cofactor. Requires K(+) as cofactor.

Its subcellular location is the cytoplasm. The catalysed reaction is L-methionine + ATP + H2O = S-adenosyl-L-methionine + phosphate + diphosphate. It participates in amino-acid biosynthesis; S-adenosyl-L-methionine biosynthesis; S-adenosyl-L-methionine from L-methionine: step 1/1. Functionally, catalyzes the formation of S-adenosylmethionine (AdoMet) from methionine and ATP. The overall synthetic reaction is composed of two sequential steps, AdoMet formation and the subsequent tripolyphosphate hydrolysis which occurs prior to release of AdoMet from the enzyme. The protein is S-adenosylmethionine synthase of Chromobacterium violaceum (strain ATCC 12472 / DSM 30191 / JCM 1249 / CCUG 213 / NBRC 12614 / NCIMB 9131 / NCTC 9757 / MK).